Here is a 443-residue protein sequence, read N- to C-terminus: Trigger factor (443 aa).

A PPIase FKBP-type domain is found at 164-249 (GDVLCVDFVG…AKSLKKAVDP (86 aa)).

It belongs to the FKBP-type PPIase family. Tig subfamily.

It localises to the cytoplasm. The catalysed reaction is [protein]-peptidylproline (omega=180) = [protein]-peptidylproline (omega=0). Functionally, involved in protein export. Acts as a chaperone by maintaining the newly synthesized protein in an open conformation. Functions as a peptidyl-prolyl cis-trans isomerase. The sequence is that of Trigger factor from Gluconobacter oxydans (strain 621H) (Gluconobacter suboxydans).